We begin with the raw amino-acid sequence, 599 residues long: Adenine deaminase (599 aa).

Belongs to the metallo-dependent hydrolases superfamily. Adenine deaminase family. The cofactor is Mn(2+).

It carries out the reaction adenine + H2O + H(+) = hypoxanthine + NH4(+). This is Adenine deaminase from Clostridium botulinum (strain ATCC 19397 / Type A).